We begin with the raw amino-acid sequence, 818 residues long: RNA-directed RNA polymerase (818 aa).

One can recognise a RdRp catalytic domain in the interval proline 524–isoleucine 641.

The protein belongs to the tombusviridae RNA polymerase family.

The catalysed reaction is RNA(n) + a ribonucleoside 5'-triphosphate = RNA(n+1) + diphosphate. RNA-dependent RNA polymerase that plays an essential role in the virus replication. This Tomato bushy stunt virus (strain Cherry) (TBSV) protein is RNA-directed RNA polymerase.